The sequence spans 148 residues: UPF0756 membrane protein CKO_01811 (148 aa).

The next 4 membrane-spanning stretches (helical) occupy residues 14–34, 51–71, 86–106, and 121–141; these read ALGF…LIIV, LTVG…SGSL, LVAI…VTLM, and VLGV…AGLV.

The protein belongs to the UPF0756 family.

The protein localises to the cell membrane. This is UPF0756 membrane protein CKO_01811 from Citrobacter koseri (strain ATCC BAA-895 / CDC 4225-83 / SGSC4696).